A 283-amino-acid chain; its full sequence is Movement protein (283 aa).

It belongs to the tenuiviruses pc4 protein family.

Functionally, transports viral genome to neighboring plant cells directly through plasmosdesmata, without any budding. The movement protein allows efficient cell to cell propagation, by bypassing the host cell wall barrier. This chain is Movement protein, found in Maize stripe virus (MStV).